A 1741-amino-acid chain; its full sequence is S-layer protein (1741 aa).

The span at 894 to 904 (SFTSDSANGSG) shows a compositional bias: polar residues. The tract at residues 894–913 (SFTSDSANGSGHSVEGGTGD) is disordered.

Glycosylated.

It is found in the secreted. The protein localises to the cell wall. Its subcellular location is the S-layer. Functionally, S-layer protein. The S-layer is a paracrystalline mono-layered assembly of proteins which coats the surface of bacteria. Under laboratory conditions, has a supportive but not a critical role in the function of the cyanobacterium. Shows no apparent hemolytic activity against sheep erythrocytes, however, a slight hemolytic activity is detected during the conformational change caused by the rebinding of Ca(2+). The sequence is that of S-layer protein from Synechocystis sp. (strain ATCC 27184 / PCC 6803 / Kazusa).